We begin with the raw amino-acid sequence, 141 residues long: Large ribosomal subunit protein uL11 (141 aa).

This sequence belongs to the universal ribosomal protein uL11 family. Part of the ribosomal stalk of the 50S ribosomal subunit. Interacts with L10 and the large rRNA to form the base of the stalk. L10 forms an elongated spine to which L12 dimers bind in a sequential fashion forming a multimeric L10(L12)X complex. One or more lysine residues are methylated.

Forms part of the ribosomal stalk which helps the ribosome interact with GTP-bound translation factors. The polypeptide is Large ribosomal subunit protein uL11 (Nitratiruptor sp. (strain SB155-2)).